Reading from the N-terminus, the 556-residue chain is Membrane protein insertase YidC (556 aa).

5 helical membrane-spanning segments follow: residues 6–26, 332–352, 358–378, 428–448, and 501–521; these read IVLY…WQID, LDLT…FSLM, VVGN…LAFY, LGGC…YWVL, and VMMF…SGLV.

Belongs to the OXA1/ALB3/YidC family. Type 1 subfamily. Interacts with the Sec translocase complex via SecD. Specifically interacts with transmembrane segments of nascent integral membrane proteins during membrane integration.

It localises to the cell inner membrane. Required for the insertion and/or proper folding and/or complex formation of integral membrane proteins into the membrane. Involved in integration of membrane proteins that insert both dependently and independently of the Sec translocase complex, as well as at least some lipoproteins. Aids folding of multispanning membrane proteins. In Legionella pneumophila (strain Lens), this protein is Membrane protein insertase YidC.